Reading from the N-terminus, the 273-residue chain is tRNA (guanine-N(7)-)-methyltransferase (273 aa).

Gly86, Glu109, Arg111, Asn142, Ala143, and Leu162 together coordinate S-adenosyl-L-methionine. The active site involves Asp165. An alphaC helix region spans residues 166–174 (PHFKKTKHK). S-adenosyl-L-methionine-binding residues include Thr240 and Glu242. Positions 240-248 (TEEGKKVQR) are alpha6 helix.

The protein belongs to the class I-like SAM-binding methyltransferase superfamily. TrmB family. Catalytic component of the METTL1-WDR4 complex, composed of mettl1 and wdr4.

The protein resides in the nucleus. It carries out the reaction guanosine(46) in tRNA + S-adenosyl-L-methionine = N(7)-methylguanosine(46) in tRNA + S-adenosyl-L-homocysteine. The catalysed reaction is a guanosine in mRNA + S-adenosyl-L-methionine = an N(7)-methylguanosine in mRNA + S-adenosyl-L-homocysteine. The enzyme catalyses a guanosine in miRNA + S-adenosyl-L-methionine = an N(7)-methylguanosine in miRNA + S-adenosyl-L-homocysteine. Its pathway is tRNA modification; N(7)-methylguanine-tRNA biosynthesis. Functionally, catalytic component of METTL1-WDR4 methyltransferase complex that mediates the formation of N(7)-methylguanine in a subset of RNA species, such as tRNAs, mRNAs and microRNAs (miRNAs). Catalyzes the formation of N(7)-methylguanine at position 46 (m7G46) in a large subset of tRNAs that contain the 5'-RAGGU-3' motif within the variable loop. M7G46 interacts with C13-G22 in the D-loop to stabilize tRNA tertiary structure and protect tRNAs from decay. Also acts as a methyltransferase for a subset of internal N(7)-methylguanine in mRNAs. Internal N(7)-methylguanine methylation of mRNAs in response to stress promotes their relocalization to stress granules, thereby suppressing their translation. Also methylates a specific subset of miRNAs. The protein is tRNA (guanine-N(7)-)-methyltransferase (mettl1) of Xenopus laevis (African clawed frog).